The sequence spans 472 residues: UDP-glycosyltransferase 708G2 (472 aa).

The Proton acceptor role is filled by His23. An anthocyanidin is bound at residue His23. Asp117 serves as the catalytic Charge relay. Thr140 contributes to the UDP-alpha-D-glucose binding site. The UDP stretch occupies residues 283–284 (SR). Residues Val346, Gln348, His363, Trp366, Asn367, Ser368, and Glu371 each contribute to the UDP-alpha-D-glucose site. Gly386 contacts an anthocyanidin. 2 residues coordinate UDP-alpha-D-glucose: Asp387 and Gln388.

The protein belongs to the UDP-glycosyltransferase family. Expressed at low levels in leaves, flowers and immature leaves.

The enzyme catalyses a 3'-hydro-2'-hydroxy-beta-oxodihydrochalcone + UDP-alpha-D-glucose = a 3'-(beta-D-glucopyranosyl)-2'-hydroxy-beta-oxodihydrochalcone + UDP + H(+). In terms of biological role, UDP-glucose-dependent glucosyltransferase catalyzing the C-glucosylation of 2-hydroxyflavanones (2-hydroxylnaringenin and 2-hydroxypinocembrin) and phloretin. No activity with flavanones, flavones or flavonols. Exhibits C-glucosylation activity toward 2-phenyl-2',4',6'-trihydroxyacetophenone. Can use UDP-xylose as sugar donor, but catalytic efficiency is much lower toward UDP-xylose than toward UDP-glucose. The sequence is that of UDP-glycosyltransferase 708G2 (UGT708G2) from Citrus unshiu (Satsuma mandarin).